The following is a 407-amino-acid chain: Peptidase T (407 aa).

His-78 contacts Zn(2+). Residue Asp-80 is part of the active site. Asp-139 is a Zn(2+) binding site. Glu-173 functions as the Proton acceptor in the catalytic mechanism. Residues Glu-174, Asp-196, and His-378 each coordinate Zn(2+).

This sequence belongs to the peptidase M20B family. Zn(2+) is required as a cofactor.

The protein resides in the cytoplasm. It catalyses the reaction Release of the N-terminal residue from a tripeptide.. In terms of biological role, cleaves the N-terminal amino acid of tripeptides. In Shewanella halifaxensis (strain HAW-EB4), this protein is Peptidase T.